Here is a 387-residue protein sequence, read N- to C-terminus: Ferrochelatase (387 aa).

Fe cation is bound by residues His196 and Glu277.

It belongs to the ferrochelatase family.

Its subcellular location is the cytoplasm. It catalyses the reaction heme b + 2 H(+) = protoporphyrin IX + Fe(2+). Its pathway is porphyrin-containing compound metabolism; protoheme biosynthesis; protoheme from protoporphyrin-IX: step 1/1. Functionally, catalyzes the ferrous insertion into protoporphyrin IX. This Rippkaea orientalis (strain PCC 8801 / RF-1) (Cyanothece sp. (strain PCC 8801)) protein is Ferrochelatase.